A 160-amino-acid polypeptide reads, in one-letter code: MNDDKTERPVKTANQRGAARLAAVQALYQMDVGGTGVLEIVAEYEAHRLGQEIDGATYLKADAGWFRSIVSGVVRDQVRLDPLIAVALQDDWALSRLDSTVRAILRAGVFELLDRKDVPVAVIVTEYVEIARAFFDDDEPKLVNAVLDRIAKQVRGEAKK.

Belongs to the NusB family.

Functionally, involved in transcription antitermination. Required for transcription of ribosomal RNA (rRNA) genes. Binds specifically to the boxA antiterminator sequence of the ribosomal RNA (rrn) operons. This Rhizobium etli (strain ATCC 51251 / DSM 11541 / JCM 21823 / NBRC 15573 / CFN 42) protein is Transcription antitermination protein NusB.